Here is a 95-residue protein sequence, read N- to C-terminus: Aspartyl/glutamyl-tRNA(Asn/Gln) amidotransferase subunit C (95 aa).

It belongs to the GatC family. Heterotrimer of A, B and C subunits.

The enzyme catalyses L-glutamyl-tRNA(Gln) + L-glutamine + ATP + H2O = L-glutaminyl-tRNA(Gln) + L-glutamate + ADP + phosphate + H(+). It catalyses the reaction L-aspartyl-tRNA(Asn) + L-glutamine + ATP + H2O = L-asparaginyl-tRNA(Asn) + L-glutamate + ADP + phosphate + 2 H(+). Functionally, allows the formation of correctly charged Asn-tRNA(Asn) or Gln-tRNA(Gln) through the transamidation of misacylated Asp-tRNA(Asn) or Glu-tRNA(Gln) in organisms which lack either or both of asparaginyl-tRNA or glutaminyl-tRNA synthetases. The reaction takes place in the presence of glutamine and ATP through an activated phospho-Asp-tRNA(Asn) or phospho-Glu-tRNA(Gln). The protein is Aspartyl/glutamyl-tRNA(Asn/Gln) amidotransferase subunit C of Nitrobacter hamburgensis (strain DSM 10229 / NCIMB 13809 / X14).